We begin with the raw amino-acid sequence, 856 residues long: DNA mismatch repair protein MutS (856 aa).

611–618 (GPNMGGKS) lines the ATP pocket.

Belongs to the DNA mismatch repair MutS family.

This protein is involved in the repair of mismatches in DNA. It is possible that it carries out the mismatch recognition step. This protein has a weak ATPase activity. The protein is DNA mismatch repair protein MutS of Histophilus somni (strain 129Pt) (Haemophilus somnus).